A 108-amino-acid polypeptide reads, in one-letter code: UPF0060 membrane protein YnfA (108 aa).

Topologically, residues 1 to 5 (MIKTT) are periplasmic. A helical transmembrane segment spans residues 6–26 (LLFFATALCEIIGCFLPWLWL). Topologically, residues 27 to 30 (KRNA) are cytoplasmic. The helical transmembrane segment at 31-51 (SIWLLLPAGISLALFVWLLTL) threads the bilayer. Residues 52 to 60 (HPAASGRVY) lie on the Periplasmic side of the membrane. The chain crosses the membrane as a helical span at residues 61–81 (AAYGGVYVCTALMWLRVVDGV). Topologically, residues 82–84 (KLT) are cytoplasmic. Residues 85–105 (LYDWTGPLIALCGMLIIVVGW) traverse the membrane as a helical segment. Residues 106–108 (GRT) lie on the Periplasmic side of the membrane.

The protein belongs to the UPF0060 family.

The protein localises to the cell inner membrane. In Escherichia coli O157:H7, this protein is UPF0060 membrane protein YnfA.